The sequence spans 491 residues: Monodehydroascorbate reductase 5, chlorplastic (491 aa).

The transit peptide at 1–42 directs the protein to the chloroplast; that stretch reads MASTAAAASSQGCISWALRQRGLGGGGARAVPVLPRRRFCVS. FAD-binding positions include 61-64, E88, R95, K100, and 194-195; these read GGNA and RD. NAD(+) is bound by residues 217–223, E241, R247, and G306; that span reads GGYIGME. NADP(+) is bound at residue 219 to 223; sequence YIGME. Residues R247 and G306 each coordinate NADP(+). Residue D344 coordinates FAD. Residue 360-361 coordinates NAD(+); that stretch reads EH. 360–361 lines the NADP(+) pocket; it reads EH. V362 contributes to the FAD binding site. Position 366 (R366) interacts with L-ascorbate. Y391 provides a ligand contact to FAD. Y391 is an NAD(+) binding site. Y391 is an NADP(+) binding site. L-ascorbate is bound at residue R393.

This sequence belongs to the FAD-dependent oxidoreductase family. FAD serves as cofactor.

It localises to the plastid. It is found in the chloroplast. It catalyses the reaction 2 monodehydro-L-ascorbate radical + NADH + H(+) = 2 L-ascorbate + NAD(+). Its function is as follows. Catalyzes the conversion of monodehydroascorbate to ascorbate, oxidizing NADH in the process. Ascorbate is a major antioxidant against reactive oxygen species (ROS) and nitric oxide (NO). The polypeptide is Monodehydroascorbate reductase 5, chlorplastic (Oryza sativa subsp. japonica (Rice)).